The primary structure comprises 507 residues: ATP synthase subunit alpha, chloroplastic (507 aa).

Residue Gly170–Thr177 participates in ATP binding.

It belongs to the ATPase alpha/beta chains family. In terms of assembly, F-type ATPases have 2 components, CF(1) - the catalytic core - and CF(0) - the membrane proton channel. CF(1) has five subunits: alpha(3), beta(3), gamma(1), delta(1), epsilon(1). CF(0) has four main subunits: a, b, b' and c.

Its subcellular location is the plastid. It localises to the chloroplast thylakoid membrane. It carries out the reaction ATP + H2O + 4 H(+)(in) = ADP + phosphate + 5 H(+)(out). Functionally, produces ATP from ADP in the presence of a proton gradient across the membrane. The alpha chain is a regulatory subunit. This chain is ATP synthase subunit alpha, chloroplastic, found in Atropa belladonna (Belladonna).